Here is a 79-residue protein sequence, read N- to C-terminus: MCCNYYGNSCGYGSGCGCGYGSGSGCGCGYGTGYGCGYGCGFGSHYGCGYGTGYGCGYGSGSGYCGYRPFCFRRCYSSC.

In terms of assembly, interacts with hair keratins.

Functionally, in the hair cortex, hair keratin intermediate filaments are embedded in an interfilamentous matrix, consisting of hair keratin-associated proteins (KRTAP), which are essential for the formation of a rigid and resistant hair shaft through their extensive disulfide bond cross-linking with abundant cysteine residues of hair keratins. The matrix proteins include the high-sulfur and high-glycine-tyrosine keratins. In Homo sapiens (Human), this protein is Keratin-associated protein 21-1 (KRTAP21-1).